A 487-amino-acid chain; its full sequence is Chromosomal replication initiator protein DnaA (487 aa).

The segment at 1 to 79 (MEKSKNIWSL…GYNNIVIVFT (79 aa)) is domain I, interacts with DnaA modulators. Residues 79 to 142 (TNQPPKTHSN…EEEPTNFKNP (64 aa)) form a domain II region. The interval 143 to 359 (FLKKRYTFEN…AAVTKLKAYI (217 aa)) is domain III, AAA+ region. The ATP site is built by Gly-187, Gly-189, Lys-190, and Thr-191. Residues 360-487 (DLDNIEIDIE…TELMNKIKKN (128 aa)) form a domain IV, binds dsDNA region.

This sequence belongs to the DnaA family. Oligomerizes as a right-handed, spiral filament on DNA at oriC.

It localises to the cytoplasm. Plays an essential role in the initiation and regulation of chromosomal replication. ATP-DnaA binds to the origin of replication (oriC) to initiate formation of the DNA replication initiation complex once per cell cycle. Binds the DnaA box (a 9 base pair repeat at the origin) and separates the double-stranded (ds)DNA. Forms a right-handed helical filament on oriC DNA; dsDNA binds to the exterior of the filament while single-stranded (ss)DNA is stabiized in the filament's interior. The ATP-DnaA-oriC complex binds and stabilizes one strand of the AT-rich DNA unwinding element (DUE), permitting loading of DNA polymerase. After initiation quickly degrades to an ADP-DnaA complex that is not apt for DNA replication. Binds acidic phospholipids. This Borreliella burgdorferi (strain ZS7) (Borrelia burgdorferi) protein is Chromosomal replication initiator protein DnaA.